The following is a 119-amino-acid chain: Fluoride-specific ion channel FluC 2 (119 aa).

4 helical membrane-spanning segments follow: residues 1-21 (MITVLTAGFGAIWGAILRYGI), 33-53 (FPYATLLINLTGAFLLGFIFS), 56-76 (FSPFIYALIGTGVLGGYTTFS), and 93-113 (VFTLYALLSYGGGLILVFLGY). Residues Gly-70 and Thr-73 each contribute to the Na(+) site.

This sequence belongs to the fluoride channel Fluc/FEX (TC 1.A.43) family.

The protein resides in the cell membrane. It catalyses the reaction fluoride(in) = fluoride(out). With respect to regulation, na(+) is not transported, but it plays an essential structural role and its presence is essential for fluoride channel function. Fluoride-specific ion channel. Important for reducing fluoride concentration in the cell, thus reducing its toxicity. This chain is Fluoride-specific ion channel FluC 2, found in Lactobacillus johnsonii (strain CNCM I-12250 / La1 / NCC 533).